Here is a 727-residue protein sequence, read N- to C-terminus: DNA topoisomerase 3 (727 aa).

Residues lysine 3–threonine 136 enclose the Toprim domain. Residues glutamate 9 and aspartate 105 each contribute to the Mg(2+) site. Residues tyrosine 153–valine 593 enclose the Topo IA-type catalytic domain. Residues serine 187–glutamine 192 are interaction with DNA. The O-(5'-phospho-DNA)-tyrosine intermediate role is filled by tyrosine 310. The segment covering lysine 685 to valine 699 has biased composition (basic and acidic residues). Positions lysine 685–asparagine 714 are disordered.

Belongs to the type IA topoisomerase family. Requires Mg(2+) as cofactor.

It catalyses the reaction ATP-independent breakage of single-stranded DNA, followed by passage and rejoining.. In terms of biological role, releases the supercoiling and torsional tension of DNA, which is introduced during the DNA replication and transcription, by transiently cleaving and rejoining one strand of the DNA duplex. Introduces a single-strand break via transesterification at a target site in duplex DNA. The scissile phosphodiester is attacked by the catalytic tyrosine of the enzyme, resulting in the formation of a DNA-(5'-phosphotyrosyl)-enzyme intermediate and the expulsion of a 3'-OH DNA strand. The free DNA strand then undergoes passage around the unbroken strand, thus removing DNA supercoils. Finally, in the religation step, the DNA 3'-OH attacks the covalent intermediate to expel the active-site tyrosine and restore the DNA phosphodiester backbone. The protein is DNA topoisomerase 3 of Bacillus subtilis (strain 168).